The primary structure comprises 66 residues: Large ribosomal subunit protein bL31 (66 aa).

Cysteine 16, cysteine 18, cysteine 36, and cysteine 39 together coordinate Zn(2+).

This sequence belongs to the bacterial ribosomal protein bL31 family. Type A subfamily. In terms of assembly, part of the 50S ribosomal subunit. Zn(2+) serves as cofactor.

Its function is as follows. Binds the 23S rRNA. The polypeptide is Large ribosomal subunit protein bL31 (Bacillus licheniformis (strain ATCC 14580 / DSM 13 / JCM 2505 / CCUG 7422 / NBRC 12200 / NCIMB 9375 / NCTC 10341 / NRRL NRS-1264 / Gibson 46)).